A 905-amino-acid chain; its full sequence is Catenin alpha-2 (905 aa).

At Thr-632 the chain carries Phosphothreonine. Phosphoserine is present on residues Ser-640, Ser-651, and Ser-853. Over residues 869–879 (VKREKPEEFQT) the composition is skewed to basic and acidic residues. Residues 869–891 (VKREKPEEFQTRVRRGSQKKHIS) form a disordered region. Over residues 880–890 (RVRRGSQKKHI) the composition is skewed to basic residues. A Phosphoserine modification is found at Ser-891.

Belongs to the vinculin/alpha-catenin family. Interacts with CDH1 and CDH2. Interacts with ZNF639; recruits CTNNA2 to the nucleus. Interacts with F-actin.

Its subcellular location is the cell membrane. It localises to the cytoplasm. The protein localises to the cytoskeleton. The protein resides in the cell junction. It is found in the adherens junction. Its subcellular location is the cell projection. It localises to the axon. The protein localises to the nucleus. May function as a linker between cadherin adhesion receptors and the cytoskeleton to regulate cell-cell adhesion and differentiation in the nervous system. Required for proper regulation of cortical neuronal migration and neurite growth. It acts as a negative regulator of Arp2/3 complex activity and Arp2/3-mediated actin polymerization. It thereby suppresses excessive actin branching which would impair neurite growth and stability. Regulates morphological plasticity of synapses and cerebellar and hippocampal lamination during development. Functions in the control of startle modulation. This Pongo abelii (Sumatran orangutan) protein is Catenin alpha-2 (CTNNA2).